We begin with the raw amino-acid sequence, 146 residues long: 3-dehydroquinate dehydratase (146 aa).

The Proton acceptor role is filled by tyrosine 24. Residues asparagine 75, histidine 81, and aspartate 88 each contribute to the substrate site. Histidine 101 acts as the Proton donor in catalysis. Residues 102–103 (LS) and arginine 112 contribute to the substrate site.

This sequence belongs to the type-II 3-dehydroquinase family. As to quaternary structure, homododecamer.

The enzyme catalyses 3-dehydroquinate = 3-dehydroshikimate + H2O. The protein operates within metabolic intermediate biosynthesis; chorismate biosynthesis; chorismate from D-erythrose 4-phosphate and phosphoenolpyruvate: step 3/7. Functionally, catalyzes a trans-dehydration via an enolate intermediate. This Caulobacter vibrioides (strain ATCC 19089 / CIP 103742 / CB 15) (Caulobacter crescentus) protein is 3-dehydroquinate dehydratase.